Reading from the N-terminus, the 331-residue chain is Ribose-phosphate pyrophosphokinase (331 aa).

55 to 57 is an ATP binding site; the sequence is DGE. Residues H148 and D187 each contribute to the Mg(2+) site. The active site involves K211. Residues R213, D237, and 241-245 each bind D-ribose 5-phosphate; that span reads DTGGT.

The protein belongs to the ribose-phosphate pyrophosphokinase family. Class I subfamily. As to quaternary structure, homohexamer. It depends on Mg(2+) as a cofactor.

It is found in the cytoplasm. It catalyses the reaction D-ribose 5-phosphate + ATP = 5-phospho-alpha-D-ribose 1-diphosphate + AMP + H(+). It participates in metabolic intermediate biosynthesis; 5-phospho-alpha-D-ribose 1-diphosphate biosynthesis; 5-phospho-alpha-D-ribose 1-diphosphate from D-ribose 5-phosphate (route I): step 1/1. In terms of biological role, involved in the biosynthesis of the central metabolite phospho-alpha-D-ribosyl-1-pyrophosphate (PRPP) via the transfer of pyrophosphoryl group from ATP to 1-hydroxyl of ribose-5-phosphate (Rib-5-P). The chain is Ribose-phosphate pyrophosphokinase from Parasynechococcus marenigrum (strain WH8102).